The sequence spans 86 residues: Putative membrane protein insertion efficiency factor (86 aa).

It belongs to the UPF0161 family.

The protein localises to the cell inner membrane. In terms of biological role, could be involved in insertion of integral membrane proteins into the membrane. In Ruegeria sp. (strain TM1040) (Silicibacter sp.), this protein is Putative membrane protein insertion efficiency factor.